A 910-amino-acid chain; its full sequence is DNA mismatch repair protein MutS (910 aa).

Residue 607-614 (GPNMAGKS) coordinates ATP.

It belongs to the DNA mismatch repair MutS family.

Its function is as follows. This protein is involved in the repair of mismatches in DNA. It is possible that it carries out the mismatch recognition step. This protein has a weak ATPase activity. The chain is DNA mismatch repair protein MutS from Geobacillus thermodenitrificans (strain NG80-2).